We begin with the raw amino-acid sequence, 130 residues long: Small ribosomal subunit protein uS9 (130 aa).

This sequence belongs to the universal ribosomal protein uS9 family.

The chain is Small ribosomal subunit protein uS9 from Yersinia enterocolitica serotype O:8 / biotype 1B (strain NCTC 13174 / 8081).